Consider the following 421-residue polypeptide: Zinc metalloproteinase-disintegrin-like crotastatin (421 aa).

Residues 10–206 (KYVKLFLVAD…NMPQCILKKP (197 aa)) enclose the Peptidase M12B domain. A glycan (N-linked (GlcNAc...) asparagine) is linked at asparagine 29. 3 disulfide bridges follow: cysteine 121/cysteine 201, cysteine 161/cysteine 185, and cysteine 163/cysteine 168. Histidine 146 is a binding site for Zn(2+). The active site involves glutamate 147. The Zn(2+) site is built by histidine 150 and histidine 156. Residues 214–299 (PAVCGNYFVE…TECTDRFQRN (86 aa)) form the Disintegrin domain. Ca(2+) is bound by residues valine 216, asparagine 219, phenylalanine 221, glutamate 223, glutamate 226, and aspartate 229. 14 disulfide bridges follow: cysteine 217-cysteine 246, cysteine 228-cysteine 241, cysteine 230-cysteine 236, cysteine 240-cysteine 263, cysteine 254-cysteine 260, cysteine 259-cysteine 285, cysteine 272-cysteine 292, cysteine 279-cysteine 310, cysteine 303-cysteine 315, cysteine 322-cysteine 372, cysteine 337-cysteine 383, cysteine 350-cysteine 360, cysteine 367-cysteine 409, and cysteine 403-cysteine 414. A D/ECD-tripeptide motif is present at residues 278–280 (ECD). Residues aspartate 280, methionine 281, aspartate 283, aspartate 294, and arginine 295 each coordinate Ca(2+).

It belongs to the venom metalloproteinase (M12B) family. P-III subfamily. P-IIIc sub-subfamily. Homodimer; disulfide-linked. Zn(2+) serves as cofactor. In terms of tissue distribution, expressed by the venom gland.

Its subcellular location is the secreted. Its function is as follows. Snake venom zinc metalloprotease that induces apoptosis in vascular endothelial cells (VEC), without degrading the extracellular matrix (it cannot cleave collagen) or inhibiting adhesion of VEC. Has also fibrinogenolytic and hemorrhagic activities. This chain is Zinc metalloproteinase-disintegrin-like crotastatin, found in Crotalus durissus terrificus (South American rattlesnake).